We begin with the raw amino-acid sequence, 213 residues long: Putative 3-methyladenine DNA glycosylase (213 aa).

Residues 165–187 (GTPVPPDQVRNGPRTGVSGDGGV) are disordered.

This sequence belongs to the DNA glycosylase MPG family.

The chain is Putative 3-methyladenine DNA glycosylase from Streptomyces avermitilis (strain ATCC 31267 / DSM 46492 / JCM 5070 / NBRC 14893 / NCIMB 12804 / NRRL 8165 / MA-4680).